A 527-amino-acid chain; its full sequence is Thymidine kinase (527 aa).

Residues 1 to 57 (MTGRGQPPKKNDTYDYPRKQPPKNGSYDNYDYPTSTKTRSTNKQRKDSNYPPRETIF) form a disordered region. Residues 9 to 18 (KKNDTYDYPR) show a composition bias toward basic and acidic residues. The span at 32–41 (YPTSTKTRST) shows a compositional bias: polar residues. 216–223 (GSIGVGKT) lines the ATP pocket. The active-site Proton acceptor is Glu243. Substrate is bound by residues Tyr260 and Gln281. Arg368 contributes to the ATP binding site. Arg374 is a substrate binding site.

The protein belongs to the herpesviridae thymidine kinase family. As to quaternary structure, homodimer.

It carries out the reaction thymidine + ATP = dTMP + ADP + H(+). In terms of biological role, catalyzes the transfer of the gamma-phospho group of ATP to thymidine to generate dTMP in the salvage pathway of pyrimidine synthesis. The dTMP serves as a substrate for DNA polymerase during viral DNA replication. Allows the virus to be reactivated and to grow in non-proliferative cells lacking a high concentration of phosphorylated nucleic acid precursors. The sequence is that of Thymidine kinase from Saimiriine herpesvirus 2 (strain 11) (SaHV-2).